Reading from the N-terminus, the 721-residue chain is uncharacterized protein (721 aa).

A helical membrane pass occupies residues 6–26; that stretch reads QLIFVNFYVILIIWWFVMGIL. Residue 308 to 315 coordinates ATP; that stretch reads GGTGSGKT.

The protein belongs to the GSP E family. Post-translationally, this protein undergoes a protein self splicing that involves a post-translational excision of the intervening region (intein) followed by peptide ligation.

The protein localises to the membrane. This is an uncharacterized protein from Methanocaldococcus jannaschii (strain ATCC 43067 / DSM 2661 / JAL-1 / JCM 10045 / NBRC 100440) (Methanococcus jannaschii).